The sequence spans 159 residues: MAKEGLPEITLPDATGLRVAVVTARWNAEICDRLHDHAVTAGRAAGAEVSEYRVVGALELPVVVQELARTHDAVVALGCVIRGGTPHFDYVCDSVTEGLTRIALDTSTPIGNGVLTTNTEEQAIERSGAEGSVEDKGAEAMVAALDTALVLSRIRADRG.

5-amino-6-(D-ribitylamino)uracil contacts are provided by residues Trp-26, 57–59 (ALE), and 79–81 (CVI). Residue 84–85 (GT) coordinates (2S)-2-hydroxy-3-oxobutyl phosphate. His-87 acts as the Proton donor in catalysis. Asn-112 is a 5-amino-6-(D-ribitylamino)uracil binding site. Arg-126 serves as a coordination point for (2S)-2-hydroxy-3-oxobutyl phosphate.

The protein belongs to the DMRL synthase family.

It catalyses the reaction (2S)-2-hydroxy-3-oxobutyl phosphate + 5-amino-6-(D-ribitylamino)uracil = 6,7-dimethyl-8-(1-D-ribityl)lumazine + phosphate + 2 H2O + H(+). It participates in cofactor biosynthesis; riboflavin biosynthesis; riboflavin from 2-hydroxy-3-oxobutyl phosphate and 5-amino-6-(D-ribitylamino)uracil: step 1/2. Functionally, catalyzes the formation of 6,7-dimethyl-8-ribityllumazine by condensation of 5-amino-6-(D-ribitylamino)uracil with 3,4-dihydroxy-2-butanone 4-phosphate. This is the penultimate step in the biosynthesis of riboflavin. The chain is 6,7-dimethyl-8-ribityllumazine synthase from Corynebacterium efficiens (strain DSM 44549 / YS-314 / AJ 12310 / JCM 11189 / NBRC 100395).